An 85-amino-acid chain; its full sequence is MKKIFLAMIHFYQRFISPLTPPTCRFYPTCSEYTREAIQYHGAFKGLYLGIRRILKCHPLHKGGFDPVPLKKDKSASKHSHKHNH.

Residues 62-85 form a disordered region; it reads KGGFDPVPLKKDKSASKHSHKHNH.

This sequence belongs to the UPF0161 family.

Its subcellular location is the cell membrane. Could be involved in insertion of integral membrane proteins into the membrane. This chain is Putative membrane protein insertion efficiency factor, found in Staphylococcus aureus (strain Mu3 / ATCC 700698).